Here is a 211-residue protein sequence, read N- to C-terminus: NADH-quinone oxidoreductase subunit I (211 aa).

Positions 1–27 (MANTDRPALPHKRAVPPSRADSGPRRR) are disordered. 4Fe-4S ferredoxin-type domains lie at 71-101 (LNRYPDGLEKCIGCELCAWACPADAIYVEGA) and 117-146 (RVYQINYLRCIGCGLCIEACPTRALTMTYD). Residues Cys81, Cys84, Cys87, Cys91, Cys126, Cys129, Cys132, and Cys136 each coordinate [4Fe-4S] cluster.

Belongs to the complex I 23 kDa subunit family. In terms of assembly, NDH-1 is composed of 14 different subunits. Subunits NuoA, H, J, K, L, M, N constitute the membrane sector of the complex. [4Fe-4S] cluster is required as a cofactor.

The protein localises to the cell membrane. The catalysed reaction is a quinone + NADH + 5 H(+)(in) = a quinol + NAD(+) + 4 H(+)(out). NDH-1 shuttles electrons from NADH, via FMN and iron-sulfur (Fe-S) centers, to quinones in the respiratory chain. The immediate electron acceptor for the enzyme in this species is believed to be menaquinone. Couples the redox reaction to proton translocation (for every two electrons transferred, four hydrogen ions are translocated across the cytoplasmic membrane), and thus conserves the redox energy in a proton gradient. The sequence is that of NADH-quinone oxidoreductase subunit I from Mycobacterium tuberculosis (strain ATCC 25177 / H37Ra).